A 316-amino-acid chain; its full sequence is Lipoyl synthase (316 aa).

Positions 61, 66, 72, 87, 91, 94, and 301 each coordinate [4Fe-4S] cluster. The 218-residue stretch at 73–290 (FGKGTATFMI…ERAAIEMGFS (218 aa)) folds into the Radical SAM core domain.

This sequence belongs to the radical SAM superfamily. Lipoyl synthase family. [4Fe-4S] cluster serves as cofactor.

The protein localises to the cytoplasm. The catalysed reaction is [[Fe-S] cluster scaffold protein carrying a second [4Fe-4S](2+) cluster] + N(6)-octanoyl-L-lysyl-[protein] + 2 oxidized [2Fe-2S]-[ferredoxin] + 2 S-adenosyl-L-methionine + 4 H(+) = [[Fe-S] cluster scaffold protein] + N(6)-[(R)-dihydrolipoyl]-L-lysyl-[protein] + 4 Fe(3+) + 2 hydrogen sulfide + 2 5'-deoxyadenosine + 2 L-methionine + 2 reduced [2Fe-2S]-[ferredoxin]. It participates in protein modification; protein lipoylation via endogenous pathway; protein N(6)-(lipoyl)lysine from octanoyl-[acyl-carrier-protein]: step 2/2. Catalyzes the radical-mediated insertion of two sulfur atoms into the C-6 and C-8 positions of the octanoyl moiety bound to the lipoyl domains of lipoate-dependent enzymes, thereby converting the octanoylated domains into lipoylated derivatives. The polypeptide is Lipoyl synthase (Nitrosospira multiformis (strain ATCC 25196 / NCIMB 11849 / C 71)).